A 511-amino-acid polypeptide reads, in one-letter code: MSEYLLEMRNIGKEFNGVKALDGIYLKVRAGECVGLCGENGAGKSTLMKVLSGVYPHGTWTGEIFWEGKELKASGIRDTEAAGIVIIHQELMMVPHLSVAENIFLGCEPTTGGFIDYDQMNARAAELLARLKINDINVALPVYHYSGGKQQLIEIAKAINKNAKLLILDEPTSALTASETRVLIDLIKDFKKQGMACVYISHKLDEVAEISDTVTVIRDGAHIATRPMSELTTPDIITMMVGREMKNLFPREPHDIGEVMFEARNISCWDVTNPGRKVVDDVSFALRRGEILGIAGLVGAGRTELVSSLFGVWPGACQGQVFLEGKEIKIRTPRDAVRQGICMVPEDRKRDGILPIMPVGHNMTISVLDRFSLRGLIDKDAELVAIQREILRLKVKTADPMLAIASLSGGNQQKAVLSKMMLPDPKVLILDEPTRGVDVGAKYEIYKLIFALARQGVSILMVSSEMPEVLGISDRVLVIGEGKLRGDFPNENLTQEKVLAAAIGKPATNAA.

ABC transporter domains lie at 6–244 (LEMR…VGRE) and 261–506 (FEAR…IGKP). 38-45 (GENGAGKS) lines the ATP pocket.

Belongs to the ABC transporter superfamily. Xylose importer (TC 3.A.1.2.4) family. The complex is composed of two ATP-binding proteins (XylG), two transmembrane proteins (XylH) and a solute-binding protein (XylF).

The protein resides in the cell inner membrane. It carries out the reaction D-xylose(out) + ATP + H2O = D-xylose(in) + ADP + phosphate + H(+). Its function is as follows. Part of the ABC transporter complex XylFGH involved in xylose import. Responsible for energy coupling to the transport system. The chain is Xylose import ATP-binding protein XylG from Brucella abortus (strain 2308).